We begin with the raw amino-acid sequence, 207 residues long: Small ribosomal subunit protein uS4 (207 aa).

The disordered stretch occupies residues 31-51; that stretch reads KCKLDSKPGQHGRTSGARTSD. Residues 97–162 form the S4 RNA-binding domain; sequence SRLDNVVYRM…QGRIRESLDL (66 aa).

Belongs to the universal ribosomal protein uS4 family. Part of the 30S ribosomal subunit. Contacts protein S5. The interaction surface between S4 and S5 is involved in control of translational fidelity.

Its function is as follows. One of the primary rRNA binding proteins, it binds directly to 16S rRNA where it nucleates assembly of the body of the 30S subunit. With S5 and S12 plays an important role in translational accuracy. The chain is Small ribosomal subunit protein uS4 from Bordetella bronchiseptica (strain ATCC BAA-588 / NCTC 13252 / RB50) (Alcaligenes bronchisepticus).